Consider the following 603-residue polypeptide: Elongation factor 4 (603 aa).

The region spanning 7 to 189 is the tr-type G domain; that stretch reads VRIRNFCIIA…AVVERVPPPP (183 aa). Residues 19–24 and 136–139 contribute to the GTP site; these read DHGKST and NKID.

This sequence belongs to the TRAFAC class translation factor GTPase superfamily. Classic translation factor GTPase family. LepA subfamily.

It is found in the cell inner membrane. It catalyses the reaction GTP + H2O = GDP + phosphate + H(+). In terms of biological role, required for accurate and efficient protein synthesis under certain stress conditions. May act as a fidelity factor of the translation reaction, by catalyzing a one-codon backward translocation of tRNAs on improperly translocated ribosomes. Back-translocation proceeds from a post-translocation (POST) complex to a pre-translocation (PRE) complex, thus giving elongation factor G a second chance to translocate the tRNAs correctly. Binds to ribosomes in a GTP-dependent manner. In Nostoc sp. (strain PCC 7120 / SAG 25.82 / UTEX 2576), this protein is Elongation factor 4.